The sequence spans 418 residues: Tyrosine--tRNA ligase 1 (418 aa).

An L-tyrosine-binding site is contributed by tyrosine 34. The 'HIGH' region signature appears at proline 39 to histidine 48. Positions 166 and 170 each coordinate L-tyrosine. Positions lysine 228 to threonine 232 match the 'KMSKS' region motif. ATP is bound at residue lysine 231. In terms of domain architecture, S4 RNA-binding spans lysine 350–valine 416.

Belongs to the class-I aminoacyl-tRNA synthetase family. TyrS type 1 subfamily. As to quaternary structure, homodimer.

It localises to the cytoplasm. The catalysed reaction is tRNA(Tyr) + L-tyrosine + ATP = L-tyrosyl-tRNA(Tyr) + AMP + diphosphate + H(+). Functionally, catalyzes the attachment of tyrosine to tRNA(Tyr) in a two-step reaction: tyrosine is first activated by ATP to form Tyr-AMP and then transferred to the acceptor end of tRNA(Tyr). This is Tyrosine--tRNA ligase 1 from Enterococcus faecalis (strain ATCC 700802 / V583).